The chain runs to 193 residues: Ribosomal RNA small subunit methyltransferase G (193 aa).

Residues G72, F77, 123–124 (IE), and R137 contribute to the S-adenosyl-L-methionine site.

This sequence belongs to the methyltransferase superfamily. RNA methyltransferase RsmG family.

The protein localises to the cytoplasm. The enzyme catalyses guanosine(527) in 16S rRNA + S-adenosyl-L-methionine = N(7)-methylguanosine(527) in 16S rRNA + S-adenosyl-L-homocysteine. Specifically methylates the N7 position of guanine in position 527 of 16S rRNA. This chain is Ribosomal RNA small subunit methyltransferase G, found in Wolinella succinogenes (strain ATCC 29543 / DSM 1740 / CCUG 13145 / JCM 31913 / LMG 7466 / NCTC 11488 / FDC 602W) (Vibrio succinogenes).